The primary structure comprises 212 residues: Phosphoribosyl-dephospho-CoA transferase (212 aa).

Residues Asp139 and Asp141 contribute to the active site.

Belongs to the MdcG family.

The catalysed reaction is apo-[malonate decarboxylase ACP] + 2'-(5''-triphospho-alpha-D-ribosyl)-3'-dephospho-CoA = holo-[malonate decarboxylase ACP] + diphosphate. Its function is as follows. Transfers 2'-(5-triphosphoribosyl)-3'-dephosphocoenzyme-A to the apo-[acyl-carrier-protein] of the malonate decarboxylase to yield holo-[acyl-carrier-protein]. The chain is Phosphoribosyl-dephospho-CoA transferase from Azotobacter vinelandii (strain DJ / ATCC BAA-1303).